Reading from the N-terminus, the 117-residue chain is Large ribosomal subunit protein uL18 (117 aa).

Belongs to the universal ribosomal protein uL18 family. As to quaternary structure, part of the 50S ribosomal subunit; part of the 5S rRNA/L5/L18/L25 subcomplex. Contacts the 5S and 23S rRNAs.

This is one of the proteins that bind and probably mediate the attachment of the 5S RNA into the large ribosomal subunit, where it forms part of the central protuberance. The polypeptide is Large ribosomal subunit protein uL18 (Aeromonas salmonicida (strain A449)).